Here is a 386-residue protein sequence, read N- to C-terminus: Putative matrix metalloproteinase (386 aa).

A signal peptide spans 1 to 34; that stretch reads MPTAHFQHSIRYLNVTNMLIFSIISFLLIYQTNS. Residues Asn14 and Asn58 are each glycosylated (N-linked (GlcNAc...) asparagine; by host). His186 contributes to the Zn(2+) binding site. The active site involves Glu187. His190 and His196 together coordinate Zn(2+). Residues 235-258 are disordered; it reads NEQSTHQSTRHRPHRRPSPDGSCR.

Belongs to the peptidase M10A family. The cofactor is Zn(2+).

The sequence is that of Putative matrix metalloproteinase from Spodoptera frugiperda (Fall armyworm).